The primary structure comprises 407 residues: D-3-phosphoglycerate dehydrogenase (407 aa).

NAD(+)-binding positions include 161–162, Asp181, 238–240, and Asp264; these read HI and ASR. The active site involves Arg240. The active site involves Glu269. Residue His292 is the Proton donor of the active site. 292-295 contacts NAD(+); that stretch reads HIGG. Residues 340-407 form the ACT domain; the sequence is RILNIHNNKP…PNSIKTRVLY (68 aa).

Belongs to the D-isomer specific 2-hydroxyacid dehydrogenase family.

It catalyses the reaction (2R)-3-phosphoglycerate + NAD(+) = 3-phosphooxypyruvate + NADH + H(+). It carries out the reaction (R)-2-hydroxyglutarate + NAD(+) = 2-oxoglutarate + NADH + H(+). It functions in the pathway amino-acid biosynthesis; L-serine biosynthesis; L-serine from 3-phospho-D-glycerate: step 1/3. Its function is as follows. Catalyzes the reversible oxidation of 3-phospho-D-glycerate to 3-phosphonooxypyruvate, the first step of the phosphorylated L-serine biosynthesis pathway. Also catalyzes the reversible oxidation of 2-hydroxyglutarate to 2-oxoglutarate. The chain is D-3-phosphoglycerate dehydrogenase (serA) from Dictyostelium discoideum (Social amoeba).